A 116-amino-acid chain; its full sequence is Ribosome-binding factor A (116 aa).

This sequence belongs to the RbfA family. As to quaternary structure, monomer. Binds 30S ribosomal subunits, but not 50S ribosomal subunits or 70S ribosomes.

Its subcellular location is the cytoplasm. One of several proteins that assist in the late maturation steps of the functional core of the 30S ribosomal subunit. Associates with free 30S ribosomal subunits (but not with 30S subunits that are part of 70S ribosomes or polysomes). Required for efficient processing of 16S rRNA. May interact with the 5'-terminal helix region of 16S rRNA. The sequence is that of Ribosome-binding factor A from Halalkalibacterium halodurans (strain ATCC BAA-125 / DSM 18197 / FERM 7344 / JCM 9153 / C-125) (Bacillus halodurans).